The primary structure comprises 738 residues: Putative RNA-binding protein EEED8.10 (738 aa).

The region spanning 112-201 is the RRM domain; sequence RKIVVSNISA…QVMVVSAYVS (90 aa). The segment at 211-237 is disordered; sequence LSDDVGSREDTPLSRASSTQSLASGSE. The segment covering 224–237 has biased composition (polar residues); that stretch reads SRASSTQSLASGSE. Positions 239 to 297 constitute an F-box domain; the sequence is SFNLGNVPDKILRRVISFLPIHETIRLERVNKKFMEESIKSWELVNKIALARETVFNKQ.

The chain is Putative RNA-binding protein EEED8.10 from Caenorhabditis elegans.